We begin with the raw amino-acid sequence, 197 residues long: Pyridoxal 5'-phosphate synthase subunit PdxT (197 aa).

52-54 (GES) serves as a coordination point for L-glutamine. Catalysis depends on C84, which acts as the Nucleophile. L-glutamine contacts are provided by residues R111 and 139 to 140 (IR). Residues H175 and E177 each act as charge relay system in the active site.

Belongs to the glutaminase PdxT/SNO family. In terms of assembly, in the presence of PdxS, forms a dodecamer of heterodimers. Only shows activity in the heterodimer.

The catalysed reaction is aldehydo-D-ribose 5-phosphate + D-glyceraldehyde 3-phosphate + L-glutamine = pyridoxal 5'-phosphate + L-glutamate + phosphate + 3 H2O + H(+). The enzyme catalyses L-glutamine + H2O = L-glutamate + NH4(+). It functions in the pathway cofactor biosynthesis; pyridoxal 5'-phosphate biosynthesis. In terms of biological role, catalyzes the hydrolysis of glutamine to glutamate and ammonia as part of the biosynthesis of pyridoxal 5'-phosphate. The resulting ammonia molecule is channeled to the active site of PdxS. This chain is Pyridoxal 5'-phosphate synthase subunit PdxT, found in Halorubrum lacusprofundi (strain ATCC 49239 / DSM 5036 / JCM 8891 / ACAM 34).